The chain runs to 187 residues: Protein GrpE (187 aa).

This sequence belongs to the GrpE family. Homodimer.

Its subcellular location is the cytoplasm. Functionally, participates actively in the response to hyperosmotic and heat shock by preventing the aggregation of stress-denatured proteins, in association with DnaK and GrpE. It is the nucleotide exchange factor for DnaK and may function as a thermosensor. Unfolded proteins bind initially to DnaJ; upon interaction with the DnaJ-bound protein, DnaK hydrolyzes its bound ATP, resulting in the formation of a stable complex. GrpE releases ADP from DnaK; ATP binding to DnaK triggers the release of the substrate protein, thus completing the reaction cycle. Several rounds of ATP-dependent interactions between DnaJ, DnaK and GrpE are required for fully efficient folding. The sequence is that of Protein GrpE from Albidiferax ferrireducens (strain ATCC BAA-621 / DSM 15236 / T118) (Rhodoferax ferrireducens).